Reading from the N-terminus, the 1044-residue chain is Protein ITPRID1 (1044 aa).

The span at 1-14 (MMAQKSQGSDNLQE) shows a compositional bias: polar residues. Disordered stretches follow at residues 1–20 (MMAQKSQGSDNLQEGQEKSK), 230–251 (EEKAGGESVQRTSVSAAKEHRR), 388–489 (MEEV…SSQE), and 583–607 (PEGAGKVQSHHNESQRSPGNDHTQD). Residues 388–398 (MEEVQSFEEET) are compositionally biased toward acidic residues. 2 stretches are compositionally biased toward polar residues: residues 460–469 (HSLVSSQDCQ) and 480–489 (RASMSFSSQE). A coiled-coil region spans residues 896 to 937 (SRDMSEEEREEAEQLQTLREALRQQVAELEFQLGDRAQQIRE).

This Homo sapiens (Human) protein is Protein ITPRID1.